Reading from the N-terminus, the 156-residue chain is Ribosomal RNA large subunit methyltransferase H (156 aa).

Residues Leu-73, Gly-104, and Leu-123–Leu-128 contribute to the S-adenosyl-L-methionine site.

It belongs to the RNA methyltransferase RlmH family. Homodimer.

Its subcellular location is the cytoplasm. The catalysed reaction is pseudouridine(1915) in 23S rRNA + S-adenosyl-L-methionine = N(3)-methylpseudouridine(1915) in 23S rRNA + S-adenosyl-L-homocysteine + H(+). Specifically methylates the pseudouridine at position 1915 (m3Psi1915) in 23S rRNA. The protein is Ribosomal RNA large subunit methyltransferase H of Vibrio vulnificus (strain CMCP6).